A 293-amino-acid chain; its full sequence is DNA repair protein RecO (293 aa).

This sequence belongs to the RecO family.

In terms of biological role, involved in DNA repair and RecF pathway recombination. This chain is DNA repair protein RecO, found in Acaryochloris marina (strain MBIC 11017).